The sequence spans 171 residues: Cadmium-induced protein AS8 (171 aa).

This Arabidopsis thaliana (Mouse-ear cress) protein is Cadmium-induced protein AS8.